A 481-amino-acid polypeptide reads, in one-letter code: Glutamate mutase epsilon subunit (481 aa).

Arginine 67 contributes to the L-glutamate binding site. Glycine 69 serves as a coordination point for adenosylcob(III)alamin. Arginine 99 lines the L-glutamate pocket. Asparagine 122 is an adenosylcob(III)alamin binding site. L-glutamate-binding positions include 148-149 (RH), glutamate 170, and tyrosine 176. Proline 179 serves as a coordination point for adenosylcob(III)alamin. Residue tyrosine 180 coordinates L-glutamate. Adenosylcob(III)alamin contacts are provided by phenylalanine 296, lysine 325, glutamate 329, and isoleucine 333.

The protein belongs to the methylaspartate mutase GlmE subunit family. Heterotetramer composed of 2 epsilon subunits (GlmE) and 2 sigma subunits (GlmS). GlmE exists as a homodimer and GlmS as a monomer. Requires adenosylcob(III)alamin as cofactor.

The enzyme catalyses (2S,3S)-3-methyl-L-aspartate = L-glutamate. It participates in amino-acid degradation; L-glutamate degradation via mesaconate pathway; acetate and pyruvate from L-glutamate: step 1/4. Functionally, catalyzes the carbon skeleton rearrangement of L-glutamate to L-threo-3-methylaspartate ((2S,3S)-3-methylaspartate). In Escherichia coli O157:H7, this protein is Glutamate mutase epsilon subunit.